The following is a 43-amino-acid chain: uncharacterized protein (43 aa).

This is an uncharacterized protein from Dictyostelium discoideum (Social amoeba).